The sequence spans 433 residues: N-lysine methyltransferase SMYD2 (433 aa).

Residues 7–241 enclose the SET domain; that stretch reads GGLERFCSPG…PGEEVFTSYI (235 aa). 17 to 19 is a binding site for S-adenosyl-L-methionine; sequence KGR. Residues Cys-52, Cys-55, Cys-65, Cys-68, Cys-74, Cys-78, His-86, and Cys-90 each contribute to the Zn(2+) site. The segment at 52–90 adopts an MYND-type zinc-finger fold; the sequence is CEFCFARKEGLSKCGRCKQAFYCNVECQKEDWPMHKLEC. S-adenosyl-L-methionine-binding positions include His-137, 206–207, and 258–260; these read NH and YFF.

This sequence belongs to the class V-like SAM-binding methyltransferase superfamily. In terms of assembly, interacts with RNA polymerase II and HELZ. Interacts with SIN3A and HDAC1. Interacts (via MYND-type zinc finger) with EPB41L3. Interacts (via SET domain) with p53/TP53. Interacts with RB1 and HSP90AA1.

It is found in the cytoplasm. The protein resides in the cytosol. It localises to the nucleus. It catalyses the reaction L-lysyl(4)-[histone H3] + 3 S-adenosyl-L-methionine = N(6),N(6),N(6)-trimethyl-L-lysyl(4)-[histone H3] + 3 S-adenosyl-L-homocysteine + 3 H(+). It carries out the reaction L-lysyl-[protein] + S-adenosyl-L-methionine = N(6)-methyl-L-lysyl-[protein] + S-adenosyl-L-homocysteine + H(+). Protein-lysine N-methyltransferase that methylates both histones and non-histone proteins, including p53/TP53 and RB1. Specifically trimethylates histone H3 'Lys-4' (H3K4me3) in vivo. The activity requires interaction with HSP90alpha. Shows even higher methyltransferase activity on p53/TP53. Monomethylates 'Lys-370' of p53/TP53, leading to decreased DNA-binding activity and subsequent transcriptional regulation activity of p53/TP53. Monomethylates RB1 at 'Lys-860'. This is N-lysine methyltransferase SMYD2 (SMYD2) from Sus scrofa (Pig).